A 688-amino-acid polypeptide reads, in one-letter code: Elongation factor G (688 aa).

A tr-type G domain is found at 8–282; the sequence is KNFRNFGIMA…AVVDFLPSPV (275 aa). GTP is bound by residues 17–24, 81–85, and 135–138; these read AHIDAGKT, DTPGH, and NKMD.

The protein belongs to the TRAFAC class translation factor GTPase superfamily. Classic translation factor GTPase family. EF-G/EF-2 subfamily.

The protein resides in the cytoplasm. Its function is as follows. Catalyzes the GTP-dependent ribosomal translocation step during translation elongation. During this step, the ribosome changes from the pre-translocational (PRE) to the post-translocational (POST) state as the newly formed A-site-bound peptidyl-tRNA and P-site-bound deacylated tRNA move to the P and E sites, respectively. Catalyzes the coordinated movement of the two tRNA molecules, the mRNA and conformational changes in the ribosome. The polypeptide is Elongation factor G (fusA) (Mycoplasma genitalium (strain ATCC 33530 / DSM 19775 / NCTC 10195 / G37) (Mycoplasmoides genitalium)).